A 167-amino-acid chain; its full sequence is Epithelial membrane protein 2 (167 aa).

A helical membrane pass occupies residues Met1–Ile21. Asn44, Asn47, and Asn52 each carry an N-linked (GlcNAc...) asparagine glycan. A run of 3 helical transmembrane segments spans residues Thr67–Phe87, Phe95–Ile115, and Tyr143–Leu163.

This sequence belongs to the PMP-22/EMP/MP20 family. Interacts with PTK2; regulates PTK2 activation and localization. Interacts with ITGB3; regulates the levels of the heterodimer ITGA5-ITGB3 integrin surface expression. Interacts with P2RX7 (via C-terminus). Interacts with ITGB1; the interaction may be direct or indirect and ITGB1 has a heterodimer form. As to expression, expressed in ciliary body epithelia, sclera, cornea, and retinal pigment epithelium (at protein level). Expressed in lung and endometrial tissue; expression is particularly abundant in secretory endometrium (at protein level). Expressed in placental villous syncytiotrophoblasts and cytotrophoblasts and on the membrane of interstitial trophoblasts (at protein level).

It localises to the golgi apparatus membrane. It is found in the cell membrane. The protein localises to the apical cell membrane. The protein resides in the membrane raft. Its subcellular location is the cytoplasm. It localises to the nucleus. It is found in the perinuclear region. Functions as a key regulator of cell membrane composition by regulating protein surface expression. Also, plays a role in regulation of processes including cell migration, cell proliferation, cell contraction and cell adhesion. Regulates transepithelial migration of neutrophils into the alveolar lumen, potentially via mediation of cell surface expression of adhesion markers and lipid raft formation. Negatively regulates caveolae formation by reducing CAV1 expression and CAV1 amount by increasing lysosomal degradation. Facilitates surface trafficking and formation of lipid rafts bearing GPI-anchor proteins. Regulates surface expression of MHC1 and ICAM1 proteins increasing susceptibility to T-cell mediated cytotoxicity. Regulates the plasma membrane expression of the integrin heterodimers ITGA6-ITGB1, ITGA5-ITGB3 and ITGA5-ITGB1 resulting in modulation of cell-matrix adhesion. Also regulates many processes through PTK2. Regulates blood vessel endothelial cell migration and angiogenesis by regulating VEGF protein expression through PTK2 activation. Regulates cell migration and cell contraction through PTK2 and SRC activation. Regulates focal adhesion density, F-actin conformation and cell adhesion capacity through interaction with PTK2. Positively regulates cell proliferation. Plays a role during cell death and cell blebbing. Promotes angiogenesis and vasculogenesis through induction of VEGFA via a HIF1A-dependent pathway. Also plays a role in embryo implantation by regulating surface trafficking of integrin heterodimer ITGA5-ITGB3. Plays a role in placental angiogenesis and uterine natural killer cell regulation at the maternal-fetal placental interface, however not required in the maternal tissues for a viable pregnancy. Involved in the early stages of embryogenic development and cardiogenesis, potentially via regulation of epithelial-mesenchymal transition timing. May play a role in glomerular filtration. In Homo sapiens (Human), this protein is Epithelial membrane protein 2 (EMP2).